Here is a 488-residue protein sequence, read N- to C-terminus: MSFNNKTIEELHNLLVSKEISATELTQATIDDIKAREEAVNAFVTVAEEAALAQAKAIDEKGIDADNLLSGIPFAVKDNISTDGILTTAASKMLYNYEPIFDATAVANAKAKDMIVIGKTNMDEFAMGGSGETSYYGATKNAWDHSKVPGGSSSGSAAAVASGQVRLSLGSDTGGSIRQPAAFNGIVGLKPTYGTVSRFGLIAFGSSLDQIGTFSQTVKENAQLLNVIASEDAKDSTSAPVRIADFTSKIGQDIKGMKIALPKEYLGEGIDPEVKETILDAAKHFEKLGATVEEVSLPHSKYGVAVYYIIASSEASSNLQRFDGIRYGFRAEDAKNLDDIYVNTRSQGFGDEVKRRIMLGTFSLSSGYYDAYYKKAGQVRTLIIQDFEKVFADYDLILGPTAPSVAFDLDTLNHDPVAMYLADLLTIPVNLAGLPGISIPAGFAQGLPVGLQLIGPKYSEETIYQAAAAFEATTDYHKQQPVIFGGDN.

Active-site charge relay system residues include Lys-77 and Ser-152. Catalysis depends on Ser-176, which acts as the Acyl-ester intermediate.

The protein belongs to the amidase family. GatA subfamily. Heterotrimer of A, B and C subunits.

It catalyses the reaction L-glutamyl-tRNA(Gln) + L-glutamine + ATP + H2O = L-glutaminyl-tRNA(Gln) + L-glutamate + ADP + phosphate + H(+). Allows the formation of correctly charged Gln-tRNA(Gln) through the transamidation of misacylated Glu-tRNA(Gln) in organisms which lack glutaminyl-tRNA synthetase. The reaction takes place in the presence of glutamine and ATP through an activated gamma-phospho-Glu-tRNA(Gln). This chain is Glutamyl-tRNA(Gln) amidotransferase subunit A, found in Streptococcus thermophilus (strain CNRZ 1066).